The primary structure comprises 461 residues: Phenolic glucoside malonyltransferase 1 (461 aa).

Catalysis depends on His-167, which acts as the Proton acceptor. The HXXXD motif signature appears at His-167–Asp-171. Position 281-282 (Ser-281–Thr-282) interacts with malonyl-CoA. Asp-400 acts as the Proton acceptor in catalysis. A DFGWG motif motif is present at residues Asp-400–Gly-404.

It belongs to the plant acyltransferase family. Phenolic glucoside malonyltransferase subfamily. In terms of tissue distribution, expressed in all tissues. Most highly expressed in the abdomen and especially in the gut.

The enzyme catalyses a flavonol 3-O-beta-D-glucoside + malonyl-CoA = a flavonol 3-O-(6-O-malonyl-beta-D-glucoside) + CoA. The catalysed reaction is kaempferol 3-O-beta-D-glucoside + malonyl-CoA = kaempferol 3-O-(6-O-malonyl-beta-D-glucoside) + CoA. It carries out the reaction quercetin 3-O-beta-D-glucoside + malonyl-CoA = quercetin 3-O-(6-O-malonyl-beta-D-glucoside) + CoA. It catalyses the reaction a flavonol 7-O-beta-D-glucoside + malonyl-CoA = a flavonol 7-O-(6-O-malonyl-beta-D-glucoside) + CoA. The enzyme catalyses (2S)-naringenin 7-O-beta-D-glucoside + malonyl-CoA = (2S)-naringenin 7-O-(6-O-malonyl-beta-D-glucoside) + CoA. The catalysed reaction is kaempferol 7-O-beta-D-glucoside + malonyl-CoA = kaempferol 7-O-(6-O-malonyl-beta-D-glucoside) + CoA. It carries out the reaction apigenin 7-O-beta-D-glucoside + malonyl-CoA = apigenin 7-O-(6-O-malonyl-beta-D-glucoside) + CoA. It catalyses the reaction rhaponticin + malonyl-CoA = 6-O-malonyl-rhaponticin + CoA. Functionally, phenolic glucoside malonyltransferase that neutralizes phenolic glycosides in host plants. Catalyzes the transfer of a malonyl group from malonyl-CoA to the phenolic glycosides, leading to their detoxification. Phenolic glycosides, which are among the most abundant plant secondary metabolites, act as plant defense compounds: they strongly affect growth, development and behavior of insect herbivores. Has malonyltransferase activity against flavonoids kaempferol 3-O-glucoside, kaempferol 7-O-glucoside, isoquercetin (quercetin 3-O-beta-D-glucopyranoside), apigetrin (apigenin 7-O-beta-D-glucoside) and prunin (naringenin 7-O-beta-D-glucoside). Also has activity toward non-flavonoid rhaponticin, but with lower efficiency. This chain is Phenolic glucoside malonyltransferase 1, found in Bemisia tabaci (Sweetpotato whitefly).